We begin with the raw amino-acid sequence, 410 residues long: Serine hydroxymethyltransferase (410 aa).

(6S)-5,6,7,8-tetrahydrofolate-binding positions include Leu119 and 123 to 125; that span reads GHL. An N6-(pyridoxal phosphate)lysine modification is found at Lys228. 351–353 is a (6S)-5,6,7,8-tetrahydrofolate binding site; sequence SPF.

This sequence belongs to the SHMT family. Homodimer. It depends on pyridoxal 5'-phosphate as a cofactor.

It localises to the cytoplasm. It catalyses the reaction (6R)-5,10-methylene-5,6,7,8-tetrahydrofolate + glycine + H2O = (6S)-5,6,7,8-tetrahydrofolate + L-serine. Its pathway is one-carbon metabolism; tetrahydrofolate interconversion. The protein operates within amino-acid biosynthesis; glycine biosynthesis; glycine from L-serine: step 1/1. Functionally, catalyzes the reversible interconversion of serine and glycine with tetrahydrofolate (THF) serving as the one-carbon carrier. This reaction serves as the major source of one-carbon groups required for the biosynthesis of purines, thymidylate, methionine, and other important biomolecules. Also exhibits THF-independent aldolase activity toward beta-hydroxyamino acids, producing glycine and aldehydes, via a retro-aldol mechanism. The chain is Serine hydroxymethyltransferase from Alkaliphilus metalliredigens (strain QYMF).